The following is a 284-amino-acid chain: 2,3,4,5-tetrahydropyridine-2,6-dicarboxylate N-succinyltransferase (284 aa).

2 residues coordinate substrate: Arg111 and Asp148.

It belongs to the transferase hexapeptide repeat family. Homotrimer.

It is found in the cytoplasm. It carries out the reaction (S)-2,3,4,5-tetrahydrodipicolinate + succinyl-CoA + H2O = (S)-2-succinylamino-6-oxoheptanedioate + CoA. It participates in amino-acid biosynthesis; L-lysine biosynthesis via DAP pathway; LL-2,6-diaminopimelate from (S)-tetrahydrodipicolinate (succinylase route): step 1/3. The chain is 2,3,4,5-tetrahydropyridine-2,6-dicarboxylate N-succinyltransferase from Ehrlichia ruminantium (strain Gardel).